A 567-amino-acid chain; its full sequence is Urease subunit alpha (567 aa).

In terms of domain architecture, Urease spans 129-567 (GGIDTHIHWI…LPMAQRYFLF (439 aa)). The Ni(2+) site is built by His134, His136, and Lys217. Lys217 carries the N6-carboxylysine modification. His219 is a binding site for substrate. Residues His246 and His272 each contribute to the Ni(2+) site. His320 acts as the Proton donor in catalysis. Asp360 contacts Ni(2+).

The protein belongs to the metallo-dependent hydrolases superfamily. Urease alpha subunit family. As to quaternary structure, heterotrimer of UreA (gamma), UreB (beta) and UreC (alpha) subunits. Three heterotrimers associate to form the active enzyme. Ni cation serves as cofactor. Post-translationally, carboxylation allows a single lysine to coordinate two nickel ions.

It is found in the cytoplasm. It carries out the reaction urea + 2 H2O + H(+) = hydrogencarbonate + 2 NH4(+). Its pathway is nitrogen metabolism; urea degradation; CO(2) and NH(3) from urea (urease route): step 1/1. The polypeptide is Urease subunit alpha (Enterobacter sp. (strain 638)).